The chain runs to 874 residues: Ectonucleotide pyrophosphatase/phosphodiesterase family member 3 (874 aa).

The Cytoplasmic segment spans residues 1-11 (MDSRLALATEE). Residues 12–30 (PIKKDSLKKYKILCVVLLA) traverse the membrane as a helical; Signal-anchor for type II membrane protein segment. Residues 31–874 (LLVIVSLGLG…TYLPTFETII (844 aa)) are Extracellular-facing. SMB domains lie at 51-93 (QGSC…VKST) and 94-138 (QIWT…GESP). 13 disulfide bridges follow: C54–C58, C54–C71, C58–C89, C69–C71, C69–C82, C75–C81, C82–C89, C98–C115, C103–C133, C113–C126, C119–C125, C144–C190, and C152–C364. Residues 78 to 80 (RGD) carry the Cell attachment site motif. Residues 160–544 (PVILFSMDGF…HGSLNHLLKT (385 aa)) form a phosphodiesterase region. D167 is a binding site for Zn(2+). K204 contributes to the ATP binding site. T205 contacts Zn(2+). The active-site Nucleophile is the T205. N226 lines the ATP pocket. Residue N236 is glycosylated (N-linked (GlcNAc...) asparagine). D275 lines the ATP pocket. N-linked (GlcNAc...) asparagine glycans are attached at residues N279 and N288. Position 289 (Y289) interacts with ATP. The Zn(2+) site is built by D325, H329, D372, and H373. Cystine bridges form between C380–C477, C428–C817, C561–C623, C574–C679, C576–C664, and C786–C796. Residue N425 is glycosylated (N-linked (GlcNAc...) asparagine). H482 provides a ligand contact to Zn(2+). N-linked (GlcNAc...) asparagine glycans are attached at residues N532, N594, N687, and N701. Residues 581 to 874 (NTPGLEEQAN…TYLPTFETII (294 aa)) are nuclease. Residues D751, N753, D755, H757, and D759 each coordinate Ca(2+). Residue N820 is glycosylated (N-linked (GlcNAc...) asparagine).

Monomer and homodimer. The cofactor is Zn(2+). In terms of processing, N-glycosylated. N-glycosylation is necessary for normal transport to the cell membrane, but is not the apical targeting signal. As to expression, detected at the tip of villi in the small intestine. Detected on basophils and mast cells (at protein level). Detected in the epithelial layer of the small intestine; expression is higher in the proximal part and lower in the distal part of the small intestine.

The protein resides in the cell membrane. The protein localises to the apical cell membrane. It is found in the secreted. The enzyme catalyses a ribonucleoside 5'-triphosphate + H2O = a ribonucleoside 5'-phosphate + diphosphate + H(+). It carries out the reaction UDP-N-acetyl-alpha-D-glucosamine + H2O = N-acetyl-alpha-D-glucosamine 1-phosphate + UMP + 2 H(+). The catalysed reaction is ATP + H2O = AMP + diphosphate + H(+). It catalyses the reaction CTP + H2O = CMP + diphosphate + H(+). The enzyme catalyses GTP + H2O = GMP + diphosphate + H(+). It carries out the reaction UTP + H2O = UMP + diphosphate + H(+). The catalysed reaction is Hydrolytically removes 5'-nucleotides successively from the 3'-hydroxy termini of 3'-hydroxy-terminated oligonucleotides.. It catalyses the reaction P(1),P(3)-bis(5'-adenosyl) triphosphate + H2O = AMP + ADP + 2 H(+). The enzyme catalyses P(1),P(4)-bis(5'-adenosyl) tetraphosphate + H2O = AMP + ATP + 2 H(+). It carries out the reaction P(1),P(5)-bis(5'-adenosyl) pentaphosphate + H2O = adenosine 5'-tetraphosphate + AMP + 2 H(+). The catalysed reaction is P(1),P(4)-bis(5'-guanosyl) tetraphosphate + H2O = GMP + GTP + 2 H(+). Functionally, hydrolase that metabolizes extracellular nucleotides, including ATP, GTP, UTP and CTP. Limits mast cells and basophils response during inflammation and during the chronic phases of allergic responses by eliminating extracellular ATP, a signaling molecule activating these cells in an autocrine manner. Metabolizes extracellular ATP in the lumen of the small intestine, and thereby prevents ATP-induced apoptosis of intestinal plasmacytoid dendritic cells. Has a broad specificity and can also hydrolyze UDP-GlcNAc into UMP and GlcNAc-1-phosphate and potentially several other intracellular nucleotide sugars, including UDP-GalNAc, CMP-NeuAc, GDP-Fuc, and UDP-GlcA. Thereby, could modulate glycan biosynthesis and protein glycosylation. Can hydrolyze extracellular dinucleoside polyphosphates, including the vasoactive adenosine polyphosphates as well. In addition, displays an alkaline phosphodiesterase activity in vitro. The chain is Ectonucleotide pyrophosphatase/phosphodiesterase family member 3 from Mus musculus (Mouse).